Reading from the N-terminus, the 817-residue chain is MFFGRDDKKEAQKRGLTVPLLPLRDIIVFPHMVVPLFVGREKSIAALKDAMAHKGPDDKAVILLAAQKKAKTNDPTPDDIFHFGTLGHVIQLLPLPDGTVKVLVEGVRRAKVKKFHPNDAFFMVEVEEVEEQTEKTVELEALVRSVHSVFEAFVKLNKRIPPEMLMQVASIDDPARLADTIVAHLSLKLNDKQALLETESPAKRLEKLYELMQGEIEILQVEKKIRTRVKKQMEKTQKEYYLNEQMQAIQKELGERDEFKNEIQEIEEKLKNKRMSKEATLKVKKELKKLRMMSPMSAEATVVRNYIDWIISLPWYDETQDRLDVTEAETVLNEDHYGLKKPKERILEYLAVQQLVKKLKGPVLCFVGPPGVGKTSLARSIARATGRKFVRLSLGGVRDEAEIRGHRRTYIGAMPGKLIQSLKKAGSNNPVFLLDEIDKMSTDFRGDPSAALLEVLDPEQNHTFNDHYLDLDYDLSKVMFICTANTMHNIPGPLQDRMEVIRIAGYTEPEKLSIARRYLIPKEQEANGLSDLKVDISDPALRTIIHRYTRESGVRSLEREIGGVFRKIARDVLKNGKRDIDVDRKMAMKFLGTPRYRYGMAEAEDQVGIVTGLAWTELGGEILTTEATIMPGKGKLIITGKLGEVMQESAQAAMSYVRSRAERFGIDRKVFENYDIHVHLPEGAIPKDGPSAGVTICTALVSALTRVLIRRDVAMTGEITLRGRVLPIGGLKEKTLAAHRAGIKTVLIPKANKKDLKDIPLKIRKQLRIVPVEFVDDVLREALVLEKPEEFGRKPTTDGGKLGGTTELPASPAVAPA.

One can recognise a Lon N-terminal domain in the interval 18–216 (VPLLPLRDII…KLYELMQGEI (199 aa)). Residue 368–375 (GPPGVGKT) participates in ATP binding. The 182-residue stretch at 604–785 (EDQVGIVTGL…DDVLREALVL (182 aa)) folds into the Lon proteolytic domain. Residues Ser-691 and Lys-734 contribute to the active site. The interval 789–817 (EEFGRKPTTDGGKLGGTTELPASPAVAPA) is disordered.

The protein belongs to the peptidase S16 family. As to quaternary structure, homohexamer. Organized in a ring with a central cavity.

The protein localises to the cytoplasm. It catalyses the reaction Hydrolysis of proteins in presence of ATP.. Its function is as follows. ATP-dependent serine protease that mediates the selective degradation of mutant and abnormal proteins as well as certain short-lived regulatory proteins. Required for cellular homeostasis and for survival from DNA damage and developmental changes induced by stress. Degrades polypeptides processively to yield small peptide fragments that are 5 to 10 amino acids long. Binds to DNA in a double-stranded, site-specific manner. In Myxococcus xanthus, this protein is Lon protease 1.